A 126-amino-acid polypeptide reads, in one-letter code: Large ribosomal subunit protein bL12 (126 aa).

This sequence belongs to the bacterial ribosomal protein bL12 family. Homodimer. Part of the ribosomal stalk of the 50S ribosomal subunit. Forms a multimeric L10(L12)X complex, where L10 forms an elongated spine to which 2 to 4 L12 dimers bind in a sequential fashion. Binds GTP-bound translation factors.

Forms part of the ribosomal stalk which helps the ribosome interact with GTP-bound translation factors. Is thus essential for accurate translation. In Koribacter versatilis (strain Ellin345), this protein is Large ribosomal subunit protein bL12.